Consider the following 1279-residue polypeptide: Amylopullulanase (1279 aa).

A signal peptide spans M1–A35. Ca(2+) is bound by residues D248, N250, D288, D343, N401, D403, N406, D407, G452, and D454. Residues H527 and R627 each contribute to the substrate site. The active-site Nucleophile is the D629. E658 functions as the Proton donor in the catalytic mechanism. Residues H734 to D735, D794, and R798 contribute to the substrate site. 2 Fibronectin type-III domains span residues A930 to I1022 and K1158 to I1252.

It belongs to the glycosyl hydrolase 13 family. It depends on Ca(2+) as a cofactor.

The catalysed reaction is Endohydrolysis of (1-&gt;4)-alpha-D-glucosidic linkages in polysaccharides containing three or more (1-&gt;4)-alpha-linked D-glucose units.. The enzyme catalyses Hydrolysis of (1-&gt;6)-alpha-D-glucosidic linkages in pullulan, amylopectin and glycogen, and in the alpha- and beta-limit dextrins of amylopectin and glycogen.. The chain is Amylopullulanase (apu) from Thermoanaerobacterium saccharolyticum.